A 286-amino-acid polypeptide reads, in one-letter code: MERILQNFSDYLMHVRRLSDHTVVAYVGDVKQFLCFLIENDIELKDVSRLHIEEYIKKLSKQKTKLNSTSLARKISSLRSFFNYLQLTSIKDENPVEGIRNPKIRRRIPDFLLPSEIQKLLEFSMKNQRDYLMLSLLYFCGLRVSELCNLRVEDLSFSPAFVKITMGKGKKDRIVPLTSKLAEKLENYITSCGKSPEDYLFGSQIKIHPSTVFRIVRKYTMMCGIKKRIHPHTLRHTFATHLLQKGVNIRVVQDLLGHSNLSTTSVYLHVVDQEKFDAINKLLQEG.

Residues 1–86 enclose the Core-binding (CB) domain; it reads MERILQNFSD…SLRSFFNYLQ (86 aa). Residues 107 to 280 form the Tyr recombinase domain; sequence RIPDFLLPSE…VDQEKFDAIN (174 aa). Residues arginine 143, lysine 168, histidine 232, arginine 235, and histidine 258 contribute to the active site. Tyrosine 267 acts as the O-(3'-phospho-DNA)-tyrosine intermediate in catalysis.

It belongs to the 'phage' integrase family.

It localises to the cytoplasm. Functionally, site-specific tyrosine recombinase, which acts by catalyzing the cutting and rejoining of the recombining DNA molecules. This Pseudothermotoga lettingae (strain ATCC BAA-301 / DSM 14385 / NBRC 107922 / TMO) (Thermotoga lettingae) protein is Tyrosine recombinase Tlet_1492.